A 606-amino-acid polypeptide reads, in one-letter code: 4-hydroxy-3-methylbut-2-en-1-yl diphosphate synthase (flavodoxin) (606 aa).

The [4Fe-4S] cluster site is built by C513, C516, C547, and E554.

This sequence belongs to the IspG family. The cofactor is [4Fe-4S] cluster.

The catalysed reaction is (2E)-4-hydroxy-3-methylbut-2-enyl diphosphate + oxidized [flavodoxin] + H2O + 2 H(+) = 2-C-methyl-D-erythritol 2,4-cyclic diphosphate + reduced [flavodoxin]. Its pathway is isoprenoid biosynthesis; isopentenyl diphosphate biosynthesis via DXP pathway; isopentenyl diphosphate from 1-deoxy-D-xylulose 5-phosphate: step 5/6. Its function is as follows. Converts 2C-methyl-D-erythritol 2,4-cyclodiphosphate (ME-2,4cPP) into 1-hydroxy-2-methyl-2-(E)-butenyl 4-diphosphate. The chain is 4-hydroxy-3-methylbut-2-en-1-yl diphosphate synthase (flavodoxin) from Chlamydia abortus (strain DSM 27085 / S26/3) (Chlamydophila abortus).